The chain runs to 128 residues: Small ribosomal subunit protein eS8 (128 aa).

Belongs to the eukaryotic ribosomal protein eS8 family. As to quaternary structure, part of the 30S ribosomal subunit.

The protein is Small ribosomal subunit protein eS8 of Methanococcus maripaludis (strain DSM 14266 / JCM 13030 / NBRC 101832 / S2 / LL).